We begin with the raw amino-acid sequence, 272 residues long: 3-methyl-2-oxobutanoate hydroxymethyltransferase (272 aa).

Mg(2+)-binding residues include aspartate 51 and aspartate 90. 3-methyl-2-oxobutanoate is bound by residues 51–52, aspartate 90, and lysine 118; that span reads DS. Glutamate 120 serves as a coordination point for Mg(2+). The Proton acceptor role is filled by glutamate 187.

It belongs to the PanB family. Homodecamer; pentamer of dimers. It depends on Mg(2+) as a cofactor.

The protein resides in the cytoplasm. The catalysed reaction is 3-methyl-2-oxobutanoate + (6R)-5,10-methylene-5,6,7,8-tetrahydrofolate + H2O = 2-dehydropantoate + (6S)-5,6,7,8-tetrahydrofolate. Its pathway is cofactor biosynthesis; (R)-pantothenate biosynthesis; (R)-pantoate from 3-methyl-2-oxobutanoate: step 1/2. Catalyzes the reversible reaction in which hydroxymethyl group from 5,10-methylenetetrahydrofolate is transferred onto alpha-ketoisovalerate to form ketopantoate. The polypeptide is 3-methyl-2-oxobutanoate hydroxymethyltransferase (Xylella fastidiosa (strain M12)).